The chain runs to 631 residues: PTS system beta-glucoside-specific EIIBCA component (631 aa).

The region spanning 1 to 86 (MNYETLASEI…LSLDGMARFS (86 aa)) is the PTS EIIB type-1 domain. Cysteine 26 serves as the catalytic Phosphocysteine intermediate; for EIIB activity. In terms of domain architecture, PTS EIIC type-1 spans 105–466 (DIISSIFTPF…DETQPAAADS (362 aa)). 10 helical membrane-spanning segments follow: residues 120–140 (ATGI…ISES), 146–166 (LLFA…GYTA), 175–195 (FTTL…AFNA), 206–226 (FLGI…ILFA), 248–268 (FFTP…LIGP), 295–315 (VMGA…FVPL), 328–348 (LLPL…GVLL), 358–378 (IAGS…VYGV), 385–405 (PFIF…YAHT), and 434–454 (AVIG…SFGV). Residues 501-605 (DRTFASGVMG…DLTTPIVITN (105 aa)) enclose the PTS EIIA type-1 domain. The Tele-phosphohistidine intermediate; for EIIA activity role is filled by histidine 553.

Its subcellular location is the cell inner membrane. In terms of biological role, the phosphoenolpyruvate-dependent sugar phosphotransferase system (sugar PTS), a major carbohydrate active -transport system, catalyzes the phosphorylation of incoming sugar substrates concomitantly with their translocation across the cell membrane. This system is involved in beta-glucoside transport. Its function is as follows. Acts both as a kinase and as a phosphatase on ArbG. The polypeptide is PTS system beta-glucoside-specific EIIBCA component (arbF) (Dickeya chrysanthemi (Pectobacterium chrysanthemi)).